The chain runs to 248 residues: MAKQTRRVLFKISGEALSKDSSNRIDEMRLSRLVSELRAVRNNDIEIALVIGGGNILRGLAEQKELQINRVSADQMGMLATLINGMAVADALKAEDIPCLLTSTLSCPQLADLYTPQKSIEALDQGKILICTTGAGSPYLTTDTGAALRACELNVDVLIKATMHVDGVYDKDPRLFPDAVKYDFVSYKDFLSNQLGVMDASAISLCMDSHIPIRVFSFLQHSLEKALFDPTIGTLVSEDVNHVCSPRH.

Residue 11-14 (KISG) coordinates ATP. Residue glycine 53 participates in UMP binding. ATP is bound by residues glycine 54 and arginine 58. Residues aspartate 74 and 135–142 (AGSPYLTT) contribute to the UMP site. Threonine 162, tyrosine 169, and aspartate 172 together coordinate ATP.

This sequence belongs to the UMP kinase family. As to quaternary structure, homohexamer.

The protein localises to the cytoplasm. The catalysed reaction is UMP + ATP = UDP + ADP. The protein operates within pyrimidine metabolism; CTP biosynthesis via de novo pathway; UDP from UMP (UMPK route): step 1/1. With respect to regulation, inhibited by UTP. Its function is as follows. Catalyzes the reversible phosphorylation of UMP to UDP. The sequence is that of Uridylate kinase from Chlamydia pneumoniae (Chlamydophila pneumoniae).